The primary structure comprises 289 residues: MAGAKEIKTKIASVQSTQKITKAMEMVATSKMRKTQDRMAASRPYSETIRNVISHVSKASIGYKHPFLVEREVKKIGILVISTDRGMCGGLNVNLFKTTLNQIKNWKEQNISTDLGLIGSKGISFFRSFGFNIKGQLSGLGDTPALEELIGVANTMFDAYRNGEIDAIYIAYNKFVNTMSQKPVVQQLVPLPESKDDHLNERQQTWDYLYEPEPKALLDSLLVRYLESQIYQAVVDNVASEQAARMVAMKAATDNAGNLINDLRLVYNKARQASITNELNEIVAGAAAI.

The protein belongs to the ATPase gamma chain family. As to quaternary structure, F-type ATPases have 2 components, CF(1) - the catalytic core - and CF(0) - the membrane proton channel. CF(1) has five subunits: alpha(3), beta(3), gamma(1), delta(1), epsilon(1). CF(0) has three main subunits: a, b and c.

It is found in the cell inner membrane. Functionally, produces ATP from ADP in the presence of a proton gradient across the membrane. The gamma chain is believed to be important in regulating ATPase activity and the flow of protons through the CF(0) complex. The sequence is that of ATP synthase gamma chain from Haemophilus influenzae (strain PittEE).